Consider the following 125-residue polypeptide: Large ribosomal subunit protein bL17 (125 aa).

It belongs to the bacterial ribosomal protein bL17 family. In terms of assembly, part of the 50S ribosomal subunit. Contacts protein L32.

The polypeptide is Large ribosomal subunit protein bL17 (Syntrophus aciditrophicus (strain SB)).